A 238-amino-acid polypeptide reads, in one-letter code: Purine nucleoside phosphorylase DeoD-type (238 aa).

A purine D-ribonucleoside is bound at residue His5. Phosphate is bound by residues Gly21, Arg25, Arg44, and 88–91 (RVGS). A purine D-ribonucleoside-binding positions include 180-182 (EME) and 204-205 (SD). The active-site Proton donor is the Asp205.

It belongs to the PNP/UDP phosphorylase family. As to quaternary structure, homohexamer; trimer of homodimers.

The enzyme catalyses a purine D-ribonucleoside + phosphate = a purine nucleobase + alpha-D-ribose 1-phosphate. The catalysed reaction is a purine 2'-deoxy-D-ribonucleoside + phosphate = a purine nucleobase + 2-deoxy-alpha-D-ribose 1-phosphate. Catalyzes the reversible phosphorolytic breakdown of the N-glycosidic bond in the beta-(deoxy)ribonucleoside molecules, with the formation of the corresponding free purine bases and pentose-1-phosphate. This chain is Purine nucleoside phosphorylase DeoD-type, found in Photorhabdus laumondii subsp. laumondii (strain DSM 15139 / CIP 105565 / TT01) (Photorhabdus luminescens subsp. laumondii).